A 697-amino-acid chain; its full sequence is Polyribonucleotide nucleotidyltransferase (697 aa).

2 residues coordinate Mg(2+): Asp486 and Asp492. Residues 553 to 612 form the KH domain; that stretch reads PRIHTIKIHPDKIKDVIGKCGSVIRALTEETKTIIDIEDDGTVTVAATDSIKAQQAICRI. In terms of domain architecture, S1 motif spans 622 to 690; it reads GSIYHGKVTR…RQGRIRLSMK (69 aa).

The protein belongs to the polyribonucleotide nucleotidyltransferase family. In terms of assembly, component of the RNA degradosome, which is a multiprotein complex involved in RNA processing and mRNA degradation. Requires Mg(2+) as cofactor.

The protein localises to the cytoplasm. The catalysed reaction is RNA(n+1) + phosphate = RNA(n) + a ribonucleoside 5'-diphosphate. Involved in mRNA degradation. Catalyzes the phosphorolysis of single-stranded polyribonucleotides processively in the 3'- to 5'-direction. The sequence is that of Polyribonucleotide nucleotidyltransferase from Baumannia cicadellinicola subsp. Homalodisca coagulata.